The sequence spans 185 residues: Ribosome-recycling factor (185 aa).

This sequence belongs to the RRF family.

The protein localises to the cytoplasm. Its function is as follows. Responsible for the release of ribosomes from messenger RNA at the termination of protein biosynthesis. May increase the efficiency of translation by recycling ribosomes from one round of translation to another. The chain is Ribosome-recycling factor from Shewanella woodyi (strain ATCC 51908 / MS32).